The primary structure comprises 161 residues: MSNEEPEKMVNDRIVVKAIEPKDEEAWNKLWKEYQGFQKTVMPPEVATTTFARFIDPTVKLWGALAFDTETGDAIGFAHYLNHLTSWHVEEVVYMNDLYVTERARVKGVGRKLIEFVYSRADELGTPAVYWVTDHYNHRAQLLYTKVAYKTDKVLYKRNGY.

Position 2 is an N-acetylserine (Ser2). An N-acetyltransferase domain is found at 14-161; the sequence is IVVKAIEPKD…DKVLYKRNGY (148 aa). 98 to 111 provides a ligand contact to acetyl-CoA; that stretch reads LYVTERARVKGVGR.

This sequence belongs to the acetyltransferase family. GNAT subfamily. Autoacetylates in an intermolecular reaction.

The protein localises to the cytoplasm. It localises to the nucleus. The enzyme catalyses a D-alpha-amino acid + acetyl-CoA = an N-acetyl-D-amino acid + CoA + H(+). In terms of biological role, N-acetyltransferase that acts on a wide range of D-amino acids. Catalyzes the N-acetylation through an ordered bi-bi mechanism, in which acetyl-CoA is the first substrate to be bound and CoA is the last product to be liberated. D-amino acids are toxic for the cell and their N-acetylation, preceding removal from cells, plays an important role in detoxification of D-amino acids. In vitro, capable of acetylating histone H4 at 'Lys-8' and polyamines like putrescine, spermidine and spermine. The sequence is that of D-amino-acid N-acetyltransferase HPA3 from Saccharomyces cerevisiae (strain ATCC 204508 / S288c) (Baker's yeast).